The following is a 221-amino-acid chain: Woronin body major protein (221 aa).

A Microbody targeting signal motif is present at residues 219-221 (SRL).

Belongs to the eIF-5A family. Hex1 subfamily. As to quaternary structure, forms oligomers. Self-assembles into hexagonal rods.

It is found in the cell septum. In terms of biological role, major component of Woronin bodies, fungal-specific organelles that occlude septal pores in order to separate intact from damaged compartments. Hex1 binds directly or indirectly to the Woronin body tether that in turn is anchored at the rim of the septal pore. This is Woronin body major protein from Emericella nidulans (strain FGSC A4 / ATCC 38163 / CBS 112.46 / NRRL 194 / M139) (Aspergillus nidulans).